Consider the following 399-residue polypeptide: Inositol polyphosphate 1-phosphatase (399 aa).

Li(+) is bound at residue Asp-54. Glu-79 contributes to the Mg(2+) binding site. Glu-80 provides a ligand contact to Li(+). Residues Asp-153 and Ile-155 each coordinate Mg(2+). 1D-myo-inositol 1,4-bisphosphate contacts are provided by Asp-156, Ser-157, Thr-158, Ser-267, Lys-269, Gly-289, Ala-290, Lys-293, and Thr-311. Residue Asp-316 coordinates Mg(2+). Residue Ser-317 is modified to Phosphoserine.

This sequence belongs to the inositol monophosphatase superfamily. In terms of assembly, monomer. It depends on Mg(2+) as a cofactor. In terms of tissue distribution, ubiquitously expressed, with highest levels in pancreas and kidney.

It carries out the reaction 1D-myo-inositol 1,4-bisphosphate + H2O = 1D-myo-inositol 4-phosphate + phosphate. It catalyses the reaction 1D-myo-inositol 1,3,4-trisphosphate + H2O = 1D-myo-inositol 3,4-bisphosphate + phosphate. It participates in signal transduction; phosphatidylinositol signaling pathway. With respect to regulation, inhibited by Li(+). Its function is as follows. Mg(2+)-dependent phosphatase that catalyzes the hydrolysis of the 1-position phosphate from inositol 1,4-bisphosphate and inositol 1,3,4-trisphosphate and participates in inositol phosphate metabolism. This is Inositol polyphosphate 1-phosphatase from Homo sapiens (Human).